Reading from the N-terminus, the 328-residue chain is DNA-directed RNA polymerase subunit alpha (328 aa).

An alpha N-terminal domain (alpha-NTD) region spans residues 1-231 (MIYQMQMPAK…EHVTFFADFS (231 aa)). An alpha C-terminal domain (alpha-CTD) region spans residues 252–328 (MRKLFNTKIE…MDITKYQMKG (77 aa)).

It belongs to the RNA polymerase alpha chain family. In terms of assembly, homodimer. The RNAP catalytic core consists of 2 alpha, 1 beta, 1 beta' and 1 omega subunit. When a sigma factor is associated with the core the holoenzyme is formed, which can initiate transcription.

The catalysed reaction is RNA(n) + a ribonucleoside 5'-triphosphate = RNA(n+1) + diphosphate. DNA-dependent RNA polymerase catalyzes the transcription of DNA into RNA using the four ribonucleoside triphosphates as substrates. The protein is DNA-directed RNA polymerase subunit alpha of Chlorobium limicola (strain DSM 245 / NBRC 103803 / 6330).